We begin with the raw amino-acid sequence, 265 residues long: Polyphosphate glucokinase (265 aa).

Positions 1–18 (MTSTGPETSETPGATTQR) are enriched in polar residues. The disordered stretch occupies residues 1–22 (MTSTGPETSETPGATTQRHGFG). 24 to 29 (DVGGSG) serves as a coordination point for ATP.

This sequence belongs to the ROK (NagC/XylR) family. As to quaternary structure, homodimer.

The enzyme catalyses [phosphate](n) + D-glucose = [phosphate](n-1) + D-glucose 6-phosphate + H(+). The catalysed reaction is D-glucose + ATP = D-glucose 6-phosphate + ADP + H(+). Its function is as follows. Catalyzes the phosphorylation of glucose using polyphosphate or ATP as the phosphoryl donor. Polyphosphate, rather than ATP, seems to be the major phosphate donor for the enzyme in M.tuberculosis. This chain is Polyphosphate glucokinase (ppgK), found in Mycobacterium tuberculosis (strain CDC 1551 / Oshkosh).